A 222-amino-acid chain; its full sequence is Pleckstrin homology domain-containing family B member 2 (222 aa).

The PH domain occupies 2-109; that stretch reads AFVKSGWLLR…WKFTLQDSRT (108 aa). Residue K20 participates in a 1,2-diacyl-sn-glycero-3-phospho-L-serine binding.

Its subcellular location is the recycling endosome membrane. In terms of biological role, involved in retrograde transport of recycling endosomes. This chain is Pleckstrin homology domain-containing family B member 2 (PLEKHB2), found in Pongo abelii (Sumatran orangutan).